The sequence spans 285 residues: Glutamate racemase (285 aa).

Substrate-binding positions include 28–29 (DS) and 60–61 (YG). The Proton donor/acceptor role is filled by Cys-92. Substrate is bound at residue 93-94 (NT). Cys-204 acts as the Proton donor/acceptor in catalysis. 205–206 (TH) is a substrate binding site.

The protein belongs to the aspartate/glutamate racemases family.

It catalyses the reaction L-glutamate = D-glutamate. Its pathway is cell wall biogenesis; peptidoglycan biosynthesis. Functionally, provides the (R)-glutamate required for cell wall biosynthesis. In Shigella flexneri serotype 5b (strain 8401), this protein is Glutamate racemase.